Here is a 462-residue protein sequence, read N- to C-terminus: Nitrate/nitrite transporter NarU (462 aa).

Over 1-35 (MALQNEKNSRYLLRDWKPENPAFWENKGKHIARRN) the chain is Cytoplasmic. The helical transmembrane segment at 36 to 56 (LWISVSCLLLAFCVWMLFSAV) threads the bilayer. At 57–76 (TVNLNKIGFNFTTDQLFLLT) the chain is on the periplasmic side. The chain crosses the membrane as a helical span at residues 77 to 97 (ALPSVSGALLRVPYSFMVPIF). Topologically, residues 98-101 (GGRR) are cytoplasmic. Residues 102–122 (WTVFSTAILIIPCVWLGIAVQ) traverse the membrane as a helical segment. The Periplasmic portion of the chain corresponds to 123-125 (NPN). The chain crosses the membrane as a helical span at residues 126-146 (TPFGIFIVIALLCGFAGANFA). The Cytoplasmic segment spans residues 147–180 (SSMGNISFFFPKAKQGSALGINGGLGNLGVSVMQ). Residues 181 to 201 (LVAPLVIFVPVFAFLGVNGVP) traverse the membrane as a helical segment. Topologically, residues 202–206 (QADGS) are periplasmic. Residues 207-227 (VMSLANAAWIWVPLLAIATIA) form a helical membrane-spanning segment. At 228 to 258 (AWSGMNDIASSRASIADQLPVLQRLHLWLLS) the chain is on the cytoplasmic side. The helical transmembrane segment at 259-279 (LLYLATFGSFIGFSAGFAMLA) threads the bilayer. Topologically, residues 280–287 (KTQFPDVN) are periplasmic. The helical transmembrane segment at 288–308 (ILRLAFFGPFIGAIARSVGGA) threads the bilayer. The Cytoplasmic portion of the chain corresponds to 309-317 (ISDKFGGVR). The helical transmembrane segment at 318–338 (VTLINFIFMAIFSALLFLTLP) threads the bilayer. Residues 339 to 344 (GTGSGN) are Periplasmic-facing. A helical membrane pass occupies residues 345 to 365 (FIAFYAVFMGLFLTAGLGSGS). The Cytoplasmic portion of the chain corresponds to 366–401 (TFQMIAVIFRQITIYRVKMKGGSDEQAHKEAVTETA). Residues 402–422 (AALGFISAIGAVGGFFIPQAF) traverse the membrane as a helical segment. The Periplasmic portion of the chain corresponds to 423 to 432 (GMSLNMTGSP). The helical transmembrane segment at 433–453 (VGAMKVFLIFYIVCVLLTWLV) threads the bilayer. Residues 454–462 (YGRRKFSQK) are Cytoplasmic-facing.

Belongs to the major facilitator superfamily. Nitrate/nitrite porter (TC 2.A.1.8) family.

The protein resides in the cell inner membrane. Functionally, catalyzes nitrate uptake, nitrite uptake and nitrite export across the cytoplasmic membrane. May function as a nitrate/H(+) and nitrite/H(+) channel. Could confer a selective advantage during severe nutrient starvation or slow growth. The chain is Nitrate/nitrite transporter NarU (narU) from Escherichia coli (strain K12).